A 781-amino-acid polypeptide reads, in one-letter code: Probable aminopeptidase 2 (781 aa).

Residues E105 and 237–241 each bind substrate; that span reads GAMEN. H272 contributes to the Zn(2+) binding site. E273 (proton acceptor) is an active-site residue. Residues H276 and E295 each coordinate Zn(2+).

Belongs to the peptidase M1 family. Zn(2+) serves as cofactor.

The protein resides in the cytoplasm. The sequence is that of Probable aminopeptidase 2 (ape2) from Sulfurisphaera tokodaii (strain DSM 16993 / JCM 10545 / NBRC 100140 / 7) (Sulfolobus tokodaii).